The primary structure comprises 1253 residues: Myosin heavy chain 95F (1253 aa).

Residues Glu3–Asp54 enclose the Myosin N-terminal SH3-like domain. Residues Gln57–Arg766 form the Myosin motor domain. Gly151 to Thr158 provides a ligand contact to ATP. The segment at Gly647–Pro666 is actin-binding. Positions Arg808–Lys837 constitute an IQ domain. The stretch at Ala900–Gln1022 forms a coiled coil. Positions Pro1187–Gly1193 are hydrophobic region. The disordered stretch occupies residues Ala1233–Gln1253.

This sequence belongs to the TRAFAC class myosin-kinesin ATPase superfamily. Myosin family. In terms of tissue distribution, isoform B is present at a higher level in the head and gonads than in the thoraxes. Isoform 145 kDa is found only in the head. CLIP-190 and jar are coexpressed at several times in development and in a number of tissues, including embryonic axonal neuron processes and posterior pole.

The protein localises to the cytoplasm. It localises to the cytoskeleton. Functionally, myosin is a protein that binds to actin and has ATPase activity that is activated by actin. Together CLIP-190 and jar may coordinate the interaction between the actin and microtubule cytoskeleton. May link endocytic vesicles to microtubules and may be involved in transport in the early embryo and in the dynamic process of dorsal closure. It is believed that its function changes during the life cycle. In Drosophila melanogaster (Fruit fly), this protein is Myosin heavy chain 95F (jar).